Consider the following 137-residue polypeptide: Nucleoside diphosphate kinase (137 aa).

The ATP site is built by Lys-9, Phe-57, Arg-85, Thr-91, Arg-102, and Asn-112. His-115 functions as the Pros-phosphohistidine intermediate in the catalytic mechanism.

The protein belongs to the NDK family. In terms of assembly, homotetramer. It depends on Mg(2+) as a cofactor.

The protein localises to the cytoplasm. The catalysed reaction is a 2'-deoxyribonucleoside 5'-diphosphate + ATP = a 2'-deoxyribonucleoside 5'-triphosphate + ADP. It catalyses the reaction a ribonucleoside 5'-diphosphate + ATP = a ribonucleoside 5'-triphosphate + ADP. Its function is as follows. Major role in the synthesis of nucleoside triphosphates other than ATP. The ATP gamma phosphate is transferred to the NDP beta phosphate via a ping-pong mechanism, using a phosphorylated active-site intermediate. In Campylobacter jejuni subsp. doylei (strain ATCC BAA-1458 / RM4099 / 269.97), this protein is Nucleoside diphosphate kinase.